Reading from the N-terminus, the 566-residue chain is Arginine--tRNA ligase (566 aa).

Positions 121–131 (PNIAKPMSMGH) match the 'HIGH' region motif.

The protein belongs to the class-I aminoacyl-tRNA synthetase family. In terms of assembly, monomer.

It localises to the cytoplasm. The enzyme catalyses tRNA(Arg) + L-arginine + ATP = L-arginyl-tRNA(Arg) + AMP + diphosphate. This Oenococcus oeni (strain ATCC BAA-331 / PSU-1) protein is Arginine--tRNA ligase.